Here is a 211-residue protein sequence, read N- to C-terminus: FMN-dependent NADH:quinone oxidoreductase 2 (211 aa).

An FMN-binding site is contributed by 102-105 (MWNF).

Belongs to the azoreductase type 1 family. As to quaternary structure, homodimer. It depends on FMN as a cofactor.

The enzyme catalyses 2 a quinone + NADH + H(+) = 2 a 1,4-benzosemiquinone + NAD(+). The catalysed reaction is N,N-dimethyl-1,4-phenylenediamine + anthranilate + 2 NAD(+) = 2-(4-dimethylaminophenyl)diazenylbenzoate + 2 NADH + 2 H(+). Functionally, quinone reductase that provides resistance to thiol-specific stress caused by electrophilic quinones. Also exhibits azoreductase activity. Catalyzes the reductive cleavage of the azo bond in aromatic azo compounds to the corresponding amines. This is FMN-dependent NADH:quinone oxidoreductase 2 from Bacillus thuringiensis subsp. konkukian (strain 97-27).